A 179-amino-acid polypeptide reads, in one-letter code: Large ribosomal subunit protein uL5 (179 aa).

This sequence belongs to the universal ribosomal protein uL5 family. In terms of assembly, part of the 50S ribosomal subunit; part of the 5S rRNA/L5/L18/L25 subcomplex. Contacts the 5S rRNA and the P site tRNA. Forms a bridge to the 30S subunit in the 70S ribosome.

This is one of the proteins that bind and probably mediate the attachment of the 5S RNA into the large ribosomal subunit, where it forms part of the central protuberance. In the 70S ribosome it contacts protein S13 of the 30S subunit (bridge B1b), connecting the 2 subunits; this bridge is implicated in subunit movement. Contacts the P site tRNA; the 5S rRNA and some of its associated proteins might help stabilize positioning of ribosome-bound tRNAs. This is Large ribosomal subunit protein uL5 from Salmonella arizonae (strain ATCC BAA-731 / CDC346-86 / RSK2980).